Reading from the N-terminus, the 88-residue chain is Small ribosomal subunit protein uS15 (88 aa).

It belongs to the universal ribosomal protein uS15 family. In terms of assembly, part of the 30S ribosomal subunit. Forms a bridge to the 50S subunit in the 70S ribosome, contacting the 23S rRNA.

Functionally, one of the primary rRNA binding proteins, it binds directly to 16S rRNA where it helps nucleate assembly of the platform of the 30S subunit by binding and bridging several RNA helices of the 16S rRNA. Its function is as follows. Forms an intersubunit bridge (bridge B4) with the 23S rRNA of the 50S subunit in the ribosome. This is Small ribosomal subunit protein uS15 from Leptospira biflexa serovar Patoc (strain Patoc 1 / Ames).